A 72-amino-acid polypeptide reads, in one-letter code: DNA-directed RNA polymerase subunit omega (72 aa).

It belongs to the RNA polymerase subunit omega family. The RNAP catalytic core consists of 2 alpha, 1 beta, 1 beta' and 1 omega subunit. When a sigma factor is associated with the core the holoenzyme is formed, which can initiate transcription.

It carries out the reaction RNA(n) + a ribonucleoside 5'-triphosphate = RNA(n+1) + diphosphate. Promotes RNA polymerase assembly. Latches the N- and C-terminal regions of the beta' subunit thereby facilitating its interaction with the beta and alpha subunits. This chain is DNA-directed RNA polymerase subunit omega, found in Francisella tularensis subsp. holarctica (strain LVS).